The primary structure comprises 375 residues: Neuropeptide Y receptor type 4-2 (375 aa).

The Extracellular portion of the chain corresponds to 1–39; sequence MNTSHLLALLLPKSPQGENRSKPLGTPYNFSEHCQDSVD. N-linked (GlcNAc...) asparagine glycans are attached at residues Asn-2, Asn-19, and Asn-29. A helical membrane pass occupies residues 40–60; sequence VMVFIVTSYSIETVVGVLGNL. Residues 61–87 are Cytoplasmic-facing; it reads CLMCVTVRQKEKANVTNLLIANLAFSD. Residues 88–108 traverse the membrane as a helical segment; sequence FLMCLLCQPLTAVYTIMDYWI. The Extracellular segment spans residues 109–116; it reads FGETLCKM. Cys-114 and Cys-201 are disulfide-bonded. Residues 117 to 137 traverse the membrane as a helical segment; the sequence is SAFIQCMSVTVSILSLVLVAL. The Cytoplasmic segment spans residues 138 to 155; that stretch reads ERHQLIINPTGWKPSISQ. A helical membrane pass occupies residues 156–176; sequence AYLGIVLIWVIACVLSLPFLA. Over 177-212 the chain is Extracellular; sequence NSILENVFHKNHSKALEFLADKVVCTESWPLAHHRT. An N-linked (GlcNAc...) asparagine glycan is attached at Asn-187. The chain crosses the membrane as a helical span at residues 213 to 233; that stretch reads IYTTFLLLFQYCLPLGFILVC. At 234–263 the chain is on the cytoplasmic side; sequence YARIYRRLQRQGRVFHKGTYSLRAGHMKQV. A helical transmembrane segment spans residues 264–284; it reads NVVLVVMVVAFAVLWLPLHVF. Over 285–301 the chain is Extracellular; that stretch reads NSLEDWHHEAIPICHGN. The chain crosses the membrane as a helical span at residues 302–322; sequence LIFLVCHLLAMASTCVNPFIY. Topologically, residues 323 to 375 are cytoplasmic; it reads GFLNTNFKKEIKALVLTCQQSAPLEESEHLPLSTVHTEVSKGSLRLSGRSNPI. A lipid anchor (S-palmitoyl cysteine) is attached at Cys-340.

The protein belongs to the G-protein coupled receptor 1 family.

The protein localises to the cell membrane. Functionally, g protein-coupled receptor for PPY/pancreatic polypeptide/PP, NPY/neuropeptide Y and PYY/peptide YY that is negatively coupled to cAMP. The rank order of affinity for these polypeptides and their derivatives is PP, PP (2-36) and [Ile-31, Gln-34] PP &gt; [Pro-34] PYY &gt; PYY and [Leu-31, Pro-34] NPY &gt; NPY &gt; PYY (3-36) and NPY (2-36) &gt; PP (13-36) &gt; PP (31-36) &gt; NPY free acid. In Homo sapiens (Human), this protein is Neuropeptide Y receptor type 4-2.